The sequence spans 234 residues: Prolactin-6A1 (234 aa).

A signal peptide spans 1 to 33 (MVKSWLRMSKKMEAGTLLMLLMSNILLWENVAS). Asparagine 61 carries an N-linked (GlcNAc...) asparagine glycan. 2 disulfide bridges follow: cysteine 93–cysteine 209 and cysteine 226–cysteine 234.

This sequence belongs to the somatotropin/prolactin family.

It localises to the secreted. In Rattus norvegicus (Rat), this protein is Prolactin-6A1 (Prl6a1).